A 404-amino-acid polypeptide reads, in one-letter code: Formate-dependent phosphoribosylglycinamide formyltransferase (404 aa).

N(1)-(5-phospho-beta-D-ribosyl)glycinamide-binding positions include 25–26 (EL) and glutamate 85. ATP contacts are provided by residues arginine 118, lysine 159, 164–169 (SSGKGQ), 199–202 (EGFI), and glutamate 207. Residues 123-318 (RLAAEELGLA…EFELHARAIL (196 aa)) form the ATP-grasp domain. 2 residues coordinate Mg(2+): glutamate 277 and glutamate 289. N(1)-(5-phospho-beta-D-ribosyl)glycinamide-binding positions include aspartate 296, lysine 365, and 372–373 (RR).

Belongs to the PurK/PurT family. As to quaternary structure, homodimer.

It catalyses the reaction N(1)-(5-phospho-beta-D-ribosyl)glycinamide + formate + ATP = N(2)-formyl-N(1)-(5-phospho-beta-D-ribosyl)glycinamide + ADP + phosphate + H(+). Its pathway is purine metabolism; IMP biosynthesis via de novo pathway; N(2)-formyl-N(1)-(5-phospho-D-ribosyl)glycinamide from N(1)-(5-phospho-D-ribosyl)glycinamide (formate route): step 1/1. In terms of biological role, involved in the de novo purine biosynthesis. Catalyzes the transfer of formate to 5-phospho-ribosyl-glycinamide (GAR), producing 5-phospho-ribosyl-N-formylglycinamide (FGAR). Formate is provided by PurU via hydrolysis of 10-formyl-tetrahydrofolate. This chain is Formate-dependent phosphoribosylglycinamide formyltransferase, found in Burkholderia vietnamiensis (strain G4 / LMG 22486) (Burkholderia cepacia (strain R1808)).